The primary structure comprises 75 residues: DNA-directed RNA polymerase subunit omega (75 aa).

It belongs to the RNA polymerase subunit omega family. As to quaternary structure, in cyanobacteria the RNAP catalytic core is composed of 2 alpha, 1 beta, 1 beta', 1 gamma and 1 omega subunit. When a sigma factor is associated with the core the holoenzyme is formed, which can initiate transcription.

The catalysed reaction is RNA(n) + a ribonucleoside 5'-triphosphate = RNA(n+1) + diphosphate. Functionally, promotes RNA polymerase assembly. Latches the N- and C-terminal regions of the beta' subunit thereby facilitating its interaction with the beta and alpha subunits. The sequence is that of DNA-directed RNA polymerase subunit omega from Gloeothece citriformis (strain PCC 7424) (Cyanothece sp. (strain PCC 7424)).